Reading from the N-terminus, the 267-residue chain is 3-methyl-2-oxobutanoate hydroxymethyltransferase (267 aa).

Mg(2+)-binding residues include Asp-46 and Asp-85. 3-methyl-2-oxobutanoate-binding positions include 46 to 47 (DS), Asp-85, and Lys-115. Glu-117 contacts Mg(2+). Glu-184 serves as the catalytic Proton acceptor.

This sequence belongs to the PanB family. Homodecamer; pentamer of dimers. It depends on Mg(2+) as a cofactor.

The protein resides in the cytoplasm. It catalyses the reaction 3-methyl-2-oxobutanoate + (6R)-5,10-methylene-5,6,7,8-tetrahydrofolate + H2O = 2-dehydropantoate + (6S)-5,6,7,8-tetrahydrofolate. It participates in cofactor biosynthesis; (R)-pantothenate biosynthesis; (R)-pantoate from 3-methyl-2-oxobutanoate: step 1/2. In terms of biological role, catalyzes the reversible reaction in which hydroxymethyl group from 5,10-methylenetetrahydrofolate is transferred onto alpha-ketoisovalerate to form ketopantoate. The protein is 3-methyl-2-oxobutanoate hydroxymethyltransferase of Citrifermentans bemidjiense (strain ATCC BAA-1014 / DSM 16622 / JCM 12645 / Bem) (Geobacter bemidjiensis).